Here is a 395-residue protein sequence, read N- to C-terminus: Putative phosphatidate cytidylyltransferase (395 aa).

9 helical membrane passes run 13–33 (STVFVVLLIVFCFFLMFSAFA), 78–98 (FAFGLVIVLFISVIAVLMNWE), 115–135 (SLLSGIMVSGGMIPTFFVIYF), 144–164 (WIWTASFAGMIVFLWAVYMIS), 177–197 (IYSLGAVICFIACIGTIYFSV), 201–221 (WTTIFLLIAIGVCTDTFAYLF), 242–262 (AFFGVTGTVLTISIICVLYSI), 306–326 (FYIYWWVSTLALIFTASIFAI), and 358–378 (FDSSSFLISFFFIYHVIAGIS).

It belongs to the CDS family.

The protein resides in the cell membrane. It carries out the reaction a 1,2-diacyl-sn-glycero-3-phosphate + CTP + H(+) = a CDP-1,2-diacyl-sn-glycerol + diphosphate. It functions in the pathway phospholipid metabolism; CDP-diacylglycerol biosynthesis; CDP-diacylglycerol from sn-glycerol 3-phosphate: step 3/3. This is Putative phosphatidate cytidylyltransferase (cdsA) from Mycoplasma pneumoniae (strain ATCC 29342 / M129 / Subtype 1) (Mycoplasmoides pneumoniae).